We begin with the raw amino-acid sequence, 114 residues long: Fumarate reductase subunit D (114 aa).

3 consecutive transmembrane segments (helical) span residues valine 24 to leucine 44, leucine 50 to proline 70, and glycine 92 to isoleucine 112.

Belongs to the FrdD family. Part of an enzyme complex containing four subunits: a flavoprotein (FrdA), an iron-sulfur protein (FrdB), and two hydrophobic anchor proteins (FrdC and FrdD).

Its subcellular location is the cell inner membrane. Its function is as follows. Anchors the catalytic components of the fumarate reductase complex to the cell membrane, binds quinones. In Haemophilus influenzae (strain 86-028NP), this protein is Fumarate reductase subunit D.